A 224-amino-acid chain; its full sequence is Cytidylate kinase (224 aa).

ATP is bound at residue 14 to 22; the sequence is GPAGSGKST.

Belongs to the cytidylate kinase family. Type 1 subfamily.

It localises to the cytoplasm. The enzyme catalyses CMP + ATP = CDP + ADP. It catalyses the reaction dCMP + ATP = dCDP + ADP. The protein is Cytidylate kinase of Mycoplasmoides gallisepticum (strain R(low / passage 15 / clone 2)) (Mycoplasma gallisepticum).